A 161-amino-acid polypeptide reads, in one-letter code: Nucleotide-binding protein PputW619_0959 (161 aa).

The protein belongs to the YajQ family.

Nucleotide-binding protein. This Pseudomonas putida (strain W619) protein is Nucleotide-binding protein PputW619_0959.